Here is a 498-residue protein sequence, read N- to C-terminus: Lysine--tRNA ligase (498 aa).

Mg(2+) is bound by residues E407 and E414.

Belongs to the class-II aminoacyl-tRNA synthetase family. As to quaternary structure, homodimer. Requires Mg(2+) as cofactor.

Its subcellular location is the cytoplasm. It carries out the reaction tRNA(Lys) + L-lysine + ATP = L-lysyl-tRNA(Lys) + AMP + diphosphate. This is Lysine--tRNA ligase from Rhizobium etli (strain ATCC 51251 / DSM 11541 / JCM 21823 / NBRC 15573 / CFN 42).